The sequence spans 445 residues: tRNA(Ile)-lysidine synthase (445 aa).

Position 30 to 35 (30 to 35 (SGGLDS)) interacts with ATP.

Belongs to the tRNA(Ile)-lysidine synthase family.

The protein localises to the cytoplasm. The enzyme catalyses cytidine(34) in tRNA(Ile2) + L-lysine + ATP = lysidine(34) in tRNA(Ile2) + AMP + diphosphate + H(+). In terms of biological role, ligates lysine onto the cytidine present at position 34 of the AUA codon-specific tRNA(Ile) that contains the anticodon CAU, in an ATP-dependent manner. Cytidine is converted to lysidine, thus changing the amino acid specificity of the tRNA from methionine to isoleucine. This Alkalilimnicola ehrlichii (strain ATCC BAA-1101 / DSM 17681 / MLHE-1) protein is tRNA(Ile)-lysidine synthase.